A 231-amino-acid polypeptide reads, in one-letter code: tRNA (guanine-N(1)-)-methyltransferase (231 aa).

Glycine 112 is an S-adenosyl-L-methionine binding site.

It belongs to the RNA methyltransferase TrmD family. Homodimer.

The protein resides in the cytoplasm. The enzyme catalyses guanosine(37) in tRNA + S-adenosyl-L-methionine = N(1)-methylguanosine(37) in tRNA + S-adenosyl-L-homocysteine + H(+). Specifically methylates guanosine-37 in various tRNAs. This chain is tRNA (guanine-N(1)-)-methyltransferase, found in Chlorobium chlorochromatii (strain CaD3).